The primary structure comprises 192 residues: Acireductone dioxygenase 2 (192 aa).

4 residues coordinate Fe(2+): His99, His101, Glu105, and His144. Ni(2+) is bound by residues His99, His101, Glu105, and His144.

Belongs to the acireductone dioxygenase (ARD) family. Fe(2+) serves as cofactor. Ni(2+) is required as a cofactor.

It localises to the cytoplasm. The protein resides in the nucleus. It catalyses the reaction 1,2-dihydroxy-5-(methylsulfanyl)pent-1-en-3-one + O2 = 4-methylsulfanyl-2-oxobutanoate + formate + 2 H(+). It carries out the reaction 1,2-dihydroxy-5-(methylsulfanyl)pent-1-en-3-one + O2 = 3-(methylsulfanyl)propanoate + CO + formate + 2 H(+). It participates in amino-acid biosynthesis; L-methionine biosynthesis via salvage pathway; L-methionine from S-methyl-5-thio-alpha-D-ribose 1-phosphate: step 5/6. Catalyzes 2 different reactions between oxygen and the acireductone 1,2-dihydroxy-3-keto-5-methylthiopentene (DHK-MTPene) depending upon the metal bound in the active site. Fe-containing acireductone dioxygenase (Fe-ARD) produces formate and 2-keto-4-methylthiobutyrate (KMTB), the alpha-ketoacid precursor of methionine in the methionine recycle pathway. Ni-containing acireductone dioxygenase (Ni-ARD) produces methylthiopropionate, carbon monoxide and formate, and does not lie on the methionine recycle pathway. In Arabidopsis thaliana (Mouse-ear cress), this protein is Acireductone dioxygenase 2 (ARD2).